A 47-amino-acid polypeptide reads, in one-letter code: Delta-halcutoxin-Hcg1a (47 aa).

3 cysteine pairs are disulfide-bonded: C3–C43, C5–C33, and C26–C44.

Belongs to the sea anemone sodium channel inhibitory toxin family. Type II subfamily.

Its subcellular location is the secreted. It localises to the nematocyst. Is potently lethal to crabs, although it showed neither lethal activity in mice nor hemolytic activity. May bind to voltage-gated sodium channels (Nav), thereby delaying their inactivation during signal transduction. This chain is Delta-halcutoxin-Hcg1a, found in Isohalcurias carlgreni (Sea anemone).